Reading from the N-terminus, the 455-residue chain is Bifunctional protein GlmU (455 aa).

A pyrophosphorylase region spans residues 1 to 229; sequence MYNCAILLAA…FEETMGVNSR (229 aa). UDP-N-acetyl-alpha-D-glucosamine is bound by residues 8-11, Lys22, Gln73, and 78-79; these read LAAG and GT. Mg(2+) is bound at residue Asp103. 4 residues coordinate UDP-N-acetyl-alpha-D-glucosamine: Gly140, Glu155, Asn170, and Asn227. Asn227 serves as a coordination point for Mg(2+). The linker stretch occupies residues 230-250; the sequence is LQLAEVEAIMRKRINAMHLEN. The N-acetyltransferase stretch occupies residues 251-455; that stretch reads GVTIIDPNNT…EDWVKKKDEK (205 aa). UDP-N-acetyl-alpha-D-glucosamine is bound by residues Arg332 and Lys350. The active-site Proton acceptor is His362. UDP-N-acetyl-alpha-D-glucosamine is bound by residues Tyr365 and Asn376. Residues 385–386, Ala422, and Arg439 contribute to the acetyl-CoA site; that span reads NY.

It in the N-terminal section; belongs to the N-acetylglucosamine-1-phosphate uridyltransferase family. The protein in the C-terminal section; belongs to the transferase hexapeptide repeat family. As to quaternary structure, homotrimer. It depends on Mg(2+) as a cofactor.

The protein localises to the cytoplasm. The catalysed reaction is alpha-D-glucosamine 1-phosphate + acetyl-CoA = N-acetyl-alpha-D-glucosamine 1-phosphate + CoA + H(+). It carries out the reaction N-acetyl-alpha-D-glucosamine 1-phosphate + UTP + H(+) = UDP-N-acetyl-alpha-D-glucosamine + diphosphate. The protein operates within nucleotide-sugar biosynthesis; UDP-N-acetyl-alpha-D-glucosamine biosynthesis; N-acetyl-alpha-D-glucosamine 1-phosphate from alpha-D-glucosamine 6-phosphate (route II): step 2/2. Its pathway is nucleotide-sugar biosynthesis; UDP-N-acetyl-alpha-D-glucosamine biosynthesis; UDP-N-acetyl-alpha-D-glucosamine from N-acetyl-alpha-D-glucosamine 1-phosphate: step 1/1. It participates in bacterial outer membrane biogenesis; LPS lipid A biosynthesis. Its function is as follows. Catalyzes the last two sequential reactions in the de novo biosynthetic pathway for UDP-N-acetylglucosamine (UDP-GlcNAc). The C-terminal domain catalyzes the transfer of acetyl group from acetyl coenzyme A to glucosamine-1-phosphate (GlcN-1-P) to produce N-acetylglucosamine-1-phosphate (GlcNAc-1-P), which is converted into UDP-GlcNAc by the transfer of uridine 5-monophosphate (from uridine 5-triphosphate), a reaction catalyzed by the N-terminal domain. This chain is Bifunctional protein GlmU, found in Clostridium tetani (strain Massachusetts / E88).